We begin with the raw amino-acid sequence, 165 residues long: Endoribonuclease YbeY (165 aa).

3 residues coordinate Zn(2+): His119, His123, and His129.

Belongs to the endoribonuclease YbeY family. The cofactor is Zn(2+).

It is found in the cytoplasm. Single strand-specific metallo-endoribonuclease involved in late-stage 70S ribosome quality control and in maturation of the 3' terminus of the 16S rRNA. The chain is Endoribonuclease YbeY from Streptomyces griseus subsp. griseus (strain JCM 4626 / CBS 651.72 / NBRC 13350 / KCC S-0626 / ISP 5235).